Consider the following 272-residue polypeptide: Magnetosome protein MamQ (272 aa).

Residues 1–46 are Cytoplasmic-facing; sequence MAVSDADASSVDKVESITLQRVKQSEELLAQLYVVEESPRRMGRGP. The helical transmembrane segment at 47-67 threads the bilayer; sequence VQLMLAISVLSLVAFITTLLM. Residues 68-272 lie on the Lumenal side of the membrane; the sequence is RYNAFVTMYE…PLTHSQESKN (205 aa).

Belongs to the LemA family.

The protein localises to the magnetosome membrane. It is found in the cell inner membrane. Essential for magnetosome formation. Not essential for formation of magnetosome membrane vesicles. One of 7 genes (mamLQBIEMO) able to induce magnetosome membrane biogenesis; coexpression of mamLQRBIEMO in a deletion of the 17 gene mamAB operon restores magnetosome vesicle formation but not magnetite biosynthesis. This Magnetospirillum gryphiswaldense (strain DSM 6361 / JCM 21280 / NBRC 15271 / MSR-1) protein is Magnetosome protein MamQ.